A 187-amino-acid chain; its full sequence is UPF0301 protein Shewmr7_1270 (187 aa).

This sequence belongs to the UPF0301 (AlgH) family.

The chain is UPF0301 protein Shewmr7_1270 from Shewanella sp. (strain MR-7).